The primary structure comprises 453 residues: Trigger factor (453 aa).

A PPIase FKBP-type domain is found at 171–256 (GDRVTISFKG…ASLIEAPQDI (86 aa)).

It belongs to the FKBP-type PPIase family. Tig subfamily.

The protein resides in the cytoplasm. The enzyme catalyses [protein]-peptidylproline (omega=180) = [protein]-peptidylproline (omega=0). Its function is as follows. Involved in protein export. Acts as a chaperone by maintaining the newly synthesized protein in an open conformation. Functions as a peptidyl-prolyl cis-trans isomerase. The chain is Trigger factor from Nitrobacter hamburgensis (strain DSM 10229 / NCIMB 13809 / X14).